The following is a 114-amino-acid chain: T cell receptor beta variable 4-2 (114 aa).

The signal sequence occupies residues 1 to 21 (MGCRLLCCAVLCLLGAVPMET). Residues 22–114 (GVTQTPRHLV…SALYLCASSQ (93 aa)) enclose the Ig-like domain. A disulfide bridge links C42 with C110. N-linked (GlcNAc...) asparagine glycans are attached at residues N76 and N89.

As to quaternary structure, alpha-beta TR is a heterodimer composed of an alpha and beta chain; disulfide-linked. The alpha-beta TR is associated with the transmembrane signaling CD3 coreceptor proteins to form the TR-CD3 (TcR or TCR). The assembly of alpha-beta TR heterodimers with CD3 occurs in the endoplasmic reticulum where a single alpha-beta TR heterodimer associates with one CD3D-CD3E heterodimer, one CD3G-CD3E heterodimer and one CD247 homodimer forming a stable octameric structure. CD3D-CD3E and CD3G-CD3E heterodimers preferentially associate with TR alpha and TR beta chains, respectively. The association of the CD247 homodimer is the last step of TcR assembly in the endoplasmic reticulum and is required for transport to the cell surface.

The protein resides in the cell membrane. V region of the variable domain of T cell receptor (TR) beta chain that participates in the antigen recognition. Alpha-beta T cell receptors are antigen specific receptors which are essential to the immune response and are present on the cell surface of T lymphocytes. Recognize peptide-major histocompatibility (MH) (pMH) complexes that are displayed by antigen presenting cells (APC), a prerequisite for efficient T cell adaptive immunity against pathogens. Binding of alpha-beta TR to pMH complex initiates TR-CD3 clustering on the cell surface and intracellular activation of LCK that phosphorylates the ITAM motifs of CD3G, CD3D, CD3E and CD247 enabling the recruitment of ZAP70. In turn ZAP70 phosphorylates LAT, which recruits numerous signaling molecules to form the LAT signalosome. The LAT signalosome propagates signal branching to three major signaling pathways, the calcium, the mitogen-activated protein kinase (MAPK) kinase and the nuclear factor NF-kappa-B (NF-kB) pathways, leading to the mobilization of transcription factors that are critical for gene expression and essential for T cell growth and differentiation. The T cell repertoire is generated in the thymus, by V-(D)-J rearrangement. This repertoire is then shaped by intrathymic selection events to generate a peripheral T cell pool of self-MH restricted, non-autoaggressive T cells. Post-thymic interaction of alpha-beta TR with the pMH complexes shapes TR structural and functional avidity. The protein is T cell receptor beta variable 4-2 of Homo sapiens (Human).